A 348-amino-acid chain; its full sequence is D-erythrose-4-phosphate dehydrogenase (348 aa).

Residues 12–13 (RI) and arginine 81 each bind NAD(+). Residues 154–156 (SCT), arginine 200, 213–214 (TK), and arginine 236 each bind substrate. Cysteine 155 (nucleophile) is an active-site residue. Asparagine 318 contacts NAD(+).

The protein belongs to the glyceraldehyde-3-phosphate dehydrogenase family. Epd subfamily. In terms of assembly, homotetramer.

It is found in the cytoplasm. The enzyme catalyses D-erythrose 4-phosphate + NAD(+) + H2O = 4-phospho-D-erythronate + NADH + 2 H(+). It functions in the pathway cofactor biosynthesis; pyridoxine 5'-phosphate biosynthesis; pyridoxine 5'-phosphate from D-erythrose 4-phosphate: step 1/5. Catalyzes the NAD-dependent conversion of D-erythrose 4-phosphate to 4-phosphoerythronate. In Salmonella paratyphi B (strain ATCC BAA-1250 / SPB7), this protein is D-erythrose-4-phosphate dehydrogenase.